A 1115-amino-acid chain; its full sequence is Phytochrome E (1115 aa).

One can recognise a GAF domain in the interval 213-383; that stretch reads DIGTLCDTVV…AFSLQLYMEL (171 aa). Cys318 lines the phytochromobilin pocket. In terms of domain architecture, PAS 1 spans 598-669; it reads MALELVRLVE…ALMCRALQGE (72 aa). One can recognise a PAC domain in the interval 672-728; it reads RNVEVKLLKFGNHPTKEVVYLVVNACTSRDYKNDIIGVCFVGQDITPEKAVMDKFVR. Positions 732 to 803 constitute a PAS 2 domain; that stretch reads DYEAIIQSLN…DALTKFMILL (72 aa). The Histidine kinase domain occupies 880–1100; that stretch reads YIQQQMKNPL…YFLIDLDFKT (221 aa).

Belongs to the phytochrome family. Homodimer. In terms of processing, contains one covalently linked phytochromobilin chromophore.

Functionally, regulatory photoreceptor which exists in two forms that are reversibly interconvertible by light: the Pr form that absorbs maximally in the red region of the spectrum and the Pfr form that absorbs maximally in the far-red region. Photoconversion of Pr to Pfr induces an array of morphogenic responses, whereas reconversion of Pfr to Pr cancels the induction of those responses. Pfr controls the expression of a number of nuclear genes including those encoding the small subunit of ribulose-bisphosphate carboxylase, chlorophyll A/B binding protein, protochlorophyllide reductase, rRNA, etc. It also controls the expression of its own gene(s) in a negative feedback fashion. This chain is Phytochrome E (PHYE), found in Ipomoea nil (Japanese morning glory).